A 433-amino-acid chain; its full sequence is MLDNKKEYLKDAMFIRDMAMQHEQLFRESIPLIASENIMSPLAMEMLLTDLGFRYAEGLPHHRYYQGNEYVDVIEDKTTELGKRLFNSKTFDPRPLSGTNANMAVLYALTEPGDKISVPPLSGGGHISAAKFGAVGFRGLKTVQYPFDINEMNIDIDGTIKTIKNERPKVCWFGQSVFLFPTPLKELQDAFNEVNARVVYDGAHVAGLIAGGEFQDPLREGAEIITGSTHKTLPGPQHGMIIGNTDDDTWKKVQRGVFPGTLSNHHLNAMAALGVTLAEELDFGRDYAKQIVKNARHLGEKLYEFGFNVLGEKNGFTRSHTLAVDVSKNGGGRKVAENLEKSGIILNKNLLPWDDNKNSQNPSGIRIGVQEITRIGFMEDDVTELAEILRDAVINEKPVNEIRRRALELKSRFNNIEYCYGNMKPYSYIKIFE.

(6S)-5,6,7,8-tetrahydrofolate contacts are provided by residues Leu-121 and Gly-125 to Ile-127. Residue Lys-231 is modified to N6-(pyridoxal phosphate)lysine.

It belongs to the SHMT family. As to quaternary structure, homodimer. Requires pyridoxal 5'-phosphate as cofactor.

The protein resides in the cytoplasm. The protein operates within amino-acid biosynthesis; glycine biosynthesis; glycine from L-serine: step 1/1. In terms of biological role, catalyzes the reversible interconversion of serine and glycine with a modified folate serving as the one-carbon carrier. Also exhibits a pteridine-independent aldolase activity toward beta-hydroxyamino acids, producing glycine and aldehydes, via a retro-aldol mechanism. The chain is Serine hydroxymethyltransferase from Picrophilus torridus (strain ATCC 700027 / DSM 9790 / JCM 10055 / NBRC 100828 / KAW 2/3).